A 259-amino-acid polypeptide reads, in one-letter code: Haloacid dehalogenase-like hydrolase domain-containing protein 2 (259 aa).

Positions 13 and 15 each coordinate Mg(2+). Residues 13–15 (DLS) and 46–47 (TN) each bind substrate. Residues 47–71 (NTTKESKQDLLERLRKLEFDISEDE) are a coiled coil. Residue K50 is modified to N6-succinyllysine. K179 provides a ligand contact to substrate. A Mg(2+)-binding site is contributed by D204.

The protein belongs to the HAD-like hydrolase superfamily. It depends on Mg(2+) as a cofactor.

In Homo sapiens (Human), this protein is Haloacid dehalogenase-like hydrolase domain-containing protein 2 (HDHD2).